Here is a 366-residue protein sequence, read N- to C-terminus: Probable dual-specificity RNA methyltransferase RlmN (366 aa).

Glu-108 functions as the Proton acceptor in the catalytic mechanism. Residues 114 to 352 (YSDRSTLCIS…CTVRDTKGQE (239 aa)) enclose the Radical SAM core domain. Cys-121 and Cys-357 are joined by a disulfide. [4Fe-4S] cluster-binding residues include Cys-128, Cys-132, and Cys-135. S-adenosyl-L-methionine-binding positions include 178-179 (GE), Ser-212, 235-237 (SLH), and Asn-314. The active-site S-methylcysteine intermediate is Cys-357.

It belongs to the radical SAM superfamily. RlmN family. It depends on [4Fe-4S] cluster as a cofactor.

Its subcellular location is the cytoplasm. It carries out the reaction adenosine(2503) in 23S rRNA + 2 reduced [2Fe-2S]-[ferredoxin] + 2 S-adenosyl-L-methionine = 2-methyladenosine(2503) in 23S rRNA + 5'-deoxyadenosine + L-methionine + 2 oxidized [2Fe-2S]-[ferredoxin] + S-adenosyl-L-homocysteine. The catalysed reaction is adenosine(37) in tRNA + 2 reduced [2Fe-2S]-[ferredoxin] + 2 S-adenosyl-L-methionine = 2-methyladenosine(37) in tRNA + 5'-deoxyadenosine + L-methionine + 2 oxidized [2Fe-2S]-[ferredoxin] + S-adenosyl-L-homocysteine. Functionally, specifically methylates position 2 of adenine 2503 in 23S rRNA and position 2 of adenine 37 in tRNAs. The chain is Probable dual-specificity RNA methyltransferase RlmN from Corynebacterium glutamicum (strain ATCC 13032 / DSM 20300 / JCM 1318 / BCRC 11384 / CCUG 27702 / LMG 3730 / NBRC 12168 / NCIMB 10025 / NRRL B-2784 / 534).